The primary structure comprises 180 residues: Large ribosomal subunit protein uL5 (180 aa).

The protein belongs to the universal ribosomal protein uL5 family. As to quaternary structure, part of the 50S ribosomal subunit; part of the 5S rRNA/L5/L18/L25 subcomplex. Contacts the 5S rRNA and the P site tRNA. Forms a bridge to the 30S subunit in the 70S ribosome.

In terms of biological role, this is one of the proteins that bind and probably mediate the attachment of the 5S RNA into the large ribosomal subunit, where it forms part of the central protuberance. In the 70S ribosome it contacts protein S13 of the 30S subunit (bridge B1b), connecting the 2 subunits; this bridge is implicated in subunit movement. Contacts the P site tRNA; the 5S rRNA and some of its associated proteins might help stabilize positioning of ribosome-bound tRNAs. In Lactococcus lactis subsp. lactis (strain IL1403) (Streptococcus lactis), this protein is Large ribosomal subunit protein uL5.